Reading from the N-terminus, the 279-residue chain is Epidermal growth factor-like protein 7 (279 aa).

A signal peptide spans Met1–Thr21. In terms of domain architecture, EMI spans Ser28–Ala109. Cystine bridges form between Cys32/Cys94, Cys57/Cys63, Cys93/Cys107, Cys112/Cys122, Cys116/Cys128, Cys130/Cys139, Cys146/Cys157, Cys153/Cys166, and Cys168/Cys181. The region spanning Gly108–Gln140 is the EGF-like 1 domain. The short motif at Pro131–Gly133 is the Cell attachment site element. The 41-residue stretch at Asp142–Leu182 folds into the EGF-like 2; calcium-binding domain. 2 coiled-coil regions span residues Ser200–Leu224 and Phe250–Ser274.

Interacts with ITGAV/ITGB3 in an RGD-dependent manner, increasing endothelial cell's motility.

The protein localises to the secreted. The protein resides in the extracellular space. Functionally, regulates vascular tubulogenesis in vivo. Inhibits platelet-derived growth factor (PDGF)-BB-induced smooth muscle cell migration and promotes endothelial cell adhesion to the extracellular matrix and angiogenesis. This Rattus norvegicus (Rat) protein is Epidermal growth factor-like protein 7 (Egfl7).